A 376-amino-acid chain; its full sequence is Methionine import ATP-binding protein MetN 2 (376 aa).

The region spanning 34–273 is the ABC transporter domain; the sequence is VRFINLGKTY…PQHDVSKTLL (240 aa). 70–77 lines the ATP pocket; it reads GRSGAGKS.

Belongs to the ABC transporter superfamily. Methionine importer (TC 3.A.1.24) family. The complex is composed of two ATP-binding proteins (MetN), two transmembrane proteins (MetI) and a solute-binding protein (MetQ).

Its subcellular location is the cell inner membrane. The enzyme catalyses L-methionine(out) + ATP + H2O = L-methionine(in) + ADP + phosphate + H(+). It catalyses the reaction D-methionine(out) + ATP + H2O = D-methionine(in) + ADP + phosphate + H(+). Its function is as follows. Part of the ABC transporter complex MetNIQ involved in methionine import. Responsible for energy coupling to the transport system. The sequence is that of Methionine import ATP-binding protein MetN 2 from Pseudomonas savastanoi pv. phaseolicola (strain 1448A / Race 6) (Pseudomonas syringae pv. phaseolicola (strain 1448A / Race 6)).